Reading from the N-terminus, the 467-residue chain is F-box protein pof9 (467 aa).

In terms of domain architecture, F-box spans 3–49 (KSPFLELSYDILLEISTYLDYKDIVHLSETCKSLSYVFDDKTIWHRF). RCC1 repeat units lie at residues 77 to 131 (RGYA…LLNE), 302 to 354 (ETFT…YLTS), and 355 to 417 (DHSI…AAGG).

Interacts with skp1.

The protein resides in the cytoplasm. It localises to the nucleus. This chain is F-box protein pof9 (pof9), found in Schizosaccharomyces pombe (strain 972 / ATCC 24843) (Fission yeast).